The sequence spans 325 residues: Aspartate carbamoyltransferase catalytic subunit (325 aa).

Carbamoyl phosphate-binding residues include R55 and T56. K83 is a binding site for L-aspartate. Carbamoyl phosphate is bound by residues R105, H135, and Q138. R176 and R230 together coordinate L-aspartate. Residues G271 and P272 each coordinate carbamoyl phosphate.

This sequence belongs to the aspartate/ornithine carbamoyltransferase superfamily. ATCase family. In terms of assembly, heterododecamer (2C3:3R2) of six catalytic PyrB chains organized as two trimers (C3), and six regulatory PyrI chains organized as three dimers (R2).

It carries out the reaction carbamoyl phosphate + L-aspartate = N-carbamoyl-L-aspartate + phosphate + H(+). It participates in pyrimidine metabolism; UMP biosynthesis via de novo pathway; (S)-dihydroorotate from bicarbonate: step 2/3. Catalyzes the condensation of carbamoyl phosphate and aspartate to form carbamoyl aspartate and inorganic phosphate, the committed step in the de novo pyrimidine nucleotide biosynthesis pathway. The protein is Aspartate carbamoyltransferase catalytic subunit of Streptomyces avermitilis (strain ATCC 31267 / DSM 46492 / JCM 5070 / NBRC 14893 / NCIMB 12804 / NRRL 8165 / MA-4680).